The primary structure comprises 501 residues: NADH-quinone oxidoreductase subunit N (501 aa).

A run of 14 helical transmembrane segments spans residues H4 to V24, F34 to L54, L80 to G100, G112 to G132, L134 to F154, L167 to M187, P207 to F227, P241 to Y261, L278 to A298, V314 to L334, H335 to W355, M376 to F396, G409 to F429, and P463 to F483.

The protein belongs to the complex I subunit 2 family. NDH-1 is composed of 14 different subunits. Subunits NuoA, H, J, K, L, M, N constitute the membrane sector of the complex.

The protein localises to the cell membrane. The catalysed reaction is a quinone + NADH + 5 H(+)(in) = a quinol + NAD(+) + 4 H(+)(out). In terms of biological role, NDH-1 shuttles electrons from NADH, via FMN and iron-sulfur (Fe-S) centers, to quinones in the respiratory chain. The immediate electron acceptor for the enzyme in this species is believed to be a menaquinone. Couples the redox reaction to proton translocation (for every two electrons transferred, four hydrogen ions are translocated across the cytoplasmic membrane), and thus conserves the redox energy in a proton gradient. This Desulforudis audaxviator (strain MP104C) protein is NADH-quinone oxidoreductase subunit N.